The sequence spans 116 residues: Large ribosomal subunit protein bL17 (116 aa).

The protein belongs to the bacterial ribosomal protein bL17 family. In terms of assembly, part of the 50S ribosomal subunit. Contacts protein L32.

This chain is Large ribosomal subunit protein bL17, found in Synechocystis sp. (strain ATCC 27184 / PCC 6803 / Kazusa).